A 455-amino-acid polypeptide reads, in one-letter code: Phosphoglucosamine mutase (455 aa).

The active-site Phosphoserine intermediate is serine 107. Mg(2+) is bound by residues serine 107, aspartate 247, aspartate 249, and aspartate 251. Serine 107 carries the post-translational modification Phosphoserine.

It belongs to the phosphohexose mutase family. Requires Mg(2+) as cofactor. Activated by phosphorylation.

The catalysed reaction is alpha-D-glucosamine 1-phosphate = D-glucosamine 6-phosphate. In terms of biological role, catalyzes the conversion of glucosamine-6-phosphate to glucosamine-1-phosphate. This Leuconostoc citreum (strain KM20) protein is Phosphoglucosamine mutase.